A 339-amino-acid chain; its full sequence is MIELFFEYIFPLIIIALKVVAITIPLILCVAYLTYAERRVIGLMQLRRGPNVVGPFGLLQPIADAVKLLFKEPIIPTNADKILFVLAPMITFILSLIGWAVIPFAKGVVLADINVGVLYILAISSLSVYGIIIAGWASNSKYAFLGAIRSSAQMISYEVSMGLVIITVLLTTGTLNLSQIVEAQRTMPWWIDLMLMPMGVVFFISVLAETNRLPFDLPEAESELVAGYNVEYSSMGFALFFLGEYANMILVSAMTTTFFLGGYLPPFNISWLDCIPGFFWFVFKVGFLLFCFLWIRATLPRYRYDQLMRLGWKVFLPLTLFWVVLVSSVLIYTDHLPNV.

The next 9 helical transmembrane spans lie at 9–29 (IFPLIIIALKVVAITIPLILC), 50–70 (PNVVGPFGLLQPIADAVKLLF), 82–102 (ILFVLAPMITFILSLIGWAVI), 115–135 (VGVLYILAISSLSVYGIIIAG), 161–181 (MGLVIITVLLTTGTLNLSQIV), 187–207 (MPWWIDLMLMPMGVVFFISVL), 235–255 (MGFALFFLGEYANMILVSAMT), 275–295 (IPGFFWFVFKVGFLLFCFLWI), and 311–331 (GWKVFLPLTLFWVVLVSSVLI).

It belongs to the complex I subunit 1 family. NDH-1 is composed of 14 different subunits. Subunits NuoA, H, J, K, L, M, N constitute the membrane sector of the complex.

The protein localises to the cell inner membrane. The enzyme catalyses a quinone + NADH + 5 H(+)(in) = a quinol + NAD(+) + 4 H(+)(out). Its function is as follows. NDH-1 shuttles electrons from NADH, via FMN and iron-sulfur (Fe-S) centers, to quinones in the respiratory chain. The immediate electron acceptor for the enzyme in this species is believed to be ubiquinone. Couples the redox reaction to proton translocation (for every two electrons transferred, four hydrogen ions are translocated across the cytoplasmic membrane), and thus conserves the redox energy in a proton gradient. This subunit may bind ubiquinone. The sequence is that of NADH-quinone oxidoreductase subunit H from Rickettsia bellii (strain RML369-C).